The chain runs to 116 residues: Ig heavy chain V region 3-6 (116 aa).

A signal peptide spans 1-18 (MKVLSLLYLLTAIPGILS). Residues 19 to 48 (DVQLQESGPGLVKPSQSLSLTCSVTGYSIT) are framework-1. A disulfide bridge links Cys-40 with Cys-114. The interval 49–53 (SGYYW) is complementarity-determining-1. The framework-2 stretch occupies residues 54 to 67 (NWIRQFPGNKLEWM). The interval 68-84 (GYISYDGSNNYNPSLKN) is complementarity-determining-2. Residues 85–116 (RISITRDTSKNQFFLKLNSVTTEDTATYYCAR) are framework-3.

This is Ig heavy chain V region 3-6 (Ighv3-6) from Mus musculus (Mouse).